The primary structure comprises 348 residues: Transmembrane protease serine 12 (348 aa).

The N-terminal stretch at 1 to 20 (MRLGLLSVALLFVGSSHLYS) is a signal peptide. The Extracellular segment spans residues 21 to 324 (DHYSPSGRHR…EHFFHASTQG (304 aa)). The disordered stretch occupies residues 24–46 (SPSGRHRLGPSPEPAASSQQAEA). The Peptidase S1 domain occupies 78–318 (IIGGTEAQAG…YQKWLTEHFF (241 aa)). An intrachain disulfide couples cysteine 107 to cysteine 123. Active-site charge relay system residues include histidine 122 and aspartate 171. 3 cysteine pairs are disulfide-bonded: cysteine 206–cysteine 274, cysteine 237–cysteine 253, and cysteine 264–cysteine 294. Asparagine 219 and asparagine 249 each carry an N-linked (GlcNAc...) asparagine glycan. The active-site Charge relay system is serine 268. The chain crosses the membrane as a helical span at residues 325-345 (ILTINILRGQILIALCFVILL). At 346–348 (ATT) the chain is on the cytoplasmic side.

Belongs to the peptidase S1 family. As to expression, in testis, expressed in spermatocytes and spermatids (at protein level).

It localises to the cell membrane. The protein resides in the cytoplasmic vesicle. Its subcellular location is the secretory vesicle. It is found in the acrosome. Required for male fertility. Plays a critical role in sperm capacitation and acrosome reactions during fertilization, and also plays a role in the regulation of proteins involved in spermatogenesis. Regulates protein pathways that promote chromosomal synapsis formation, double-strand break repair, formation of the inner mitochondrial membrane cristae and apoptosis in developing sperm. Required for normal sperm motility and binding to the zona pellucida, potentially via a role in ADAM3 protein maturation. This Homo sapiens (Human) protein is Transmembrane protease serine 12.